The sequence spans 342 residues: Anthranilate phosphoribosyltransferase (342 aa).

5-phospho-alpha-D-ribose 1-diphosphate is bound by residues G83, 86-87, T91, 93-96, 111-119, and S123; these read GD, NVST, and KHGNRSVSG. Position 83 (G83) interacts with anthranilate. Mg(2+) is bound at residue S95. N114 lines the anthranilate pocket. R169 lines the anthranilate pocket. The Mg(2+) site is built by D228 and E229.

The protein belongs to the anthranilate phosphoribosyltransferase family. In terms of assembly, homodimer. Mg(2+) is required as a cofactor.

The catalysed reaction is N-(5-phospho-beta-D-ribosyl)anthranilate + diphosphate = 5-phospho-alpha-D-ribose 1-diphosphate + anthranilate. It participates in amino-acid biosynthesis; L-tryptophan biosynthesis; L-tryptophan from chorismate: step 2/5. Its function is as follows. Catalyzes the transfer of the phosphoribosyl group of 5-phosphorylribose-1-pyrophosphate (PRPP) to anthranilate to yield N-(5'-phosphoribosyl)-anthranilate (PRA). This Halorhodospira halophila (strain DSM 244 / SL1) (Ectothiorhodospira halophila (strain DSM 244 / SL1)) protein is Anthranilate phosphoribosyltransferase.